The sequence spans 139 residues: Ribonuclease P protein component (139 aa).

It belongs to the RnpA family. As to quaternary structure, consists of a catalytic RNA component (M1 or rnpB) and a protein subunit.

It catalyses the reaction Endonucleolytic cleavage of RNA, removing 5'-extranucleotides from tRNA precursor.. Its function is as follows. RNaseP catalyzes the removal of the 5'-leader sequence from pre-tRNA to produce the mature 5'-terminus. It can also cleave other RNA substrates such as 4.5S RNA. The protein component plays an auxiliary but essential role in vivo by binding to the 5'-leader sequence and broadening the substrate specificity of the ribozyme. The chain is Ribonuclease P protein component from Paraburkholderia xenovorans (strain LB400).